Here is a 525-residue protein sequence, read N- to C-terminus: GMP synthase [glutamine-hydrolyzing] (525 aa).

The Glutamine amidotransferase type-1 domain occupies 9-207 (RILILDFGSQ…VLDICGCEAL (199 aa)). C86 serves as the catalytic Nucleophile. Catalysis depends on residues H181 and E183. The 193-residue stretch at 208–400 (WTPSKIAEDA…LGLPYDMVYR (193 aa)) folds into the GMPS ATP-PPase domain. 235–241 (SGGVDSS) provides a ligand contact to ATP.

As to quaternary structure, homodimer.

The catalysed reaction is XMP + L-glutamine + ATP + H2O = GMP + L-glutamate + AMP + diphosphate + 2 H(+). It functions in the pathway purine metabolism; GMP biosynthesis; GMP from XMP (L-Gln route): step 1/1. In terms of biological role, catalyzes the synthesis of GMP from XMP. The protein is GMP synthase [glutamine-hydrolyzing] of Pseudomonas fluorescens (strain Pf0-1).